Consider the following 149-residue polypeptide: Active regulator of SIRT1 (149 aa).

The segment at 1-64 (MSVSLLRKGL…GLRHDQKATA (64 aa)) is disordered. Positions 8–19 (KGLDLLREERSG) are enriched in basic and acidic residues. Over residues 30–41 (SSKPKPCLSSSK) the composition is skewed to low complexity. Positions 43-52 (GMRKQLRRLK) are enriched in basic residues.

It belongs to the AROS family. As to quaternary structure, part of the small subunit (SSU) processome, composed of more than 70 proteins and the RNA chaperone small nucleolar RNA (snoRNA) U3.

Its subcellular location is the nucleus. The protein resides in the nucleolus. Its function is as follows. Part of the small subunit (SSU) processome, first precursor of the small eukaryotic ribosomal subunit. During the assembly of the SSU processome in the nucleolus, many ribosome biogenesis factors, an RNA chaperone and ribosomal proteins associate with the nascent pre-rRNA and work in concert to generate RNA folding, modifications, rearrangements and cleavage as well as targeted degradation of pre-ribosomal RNA by the RNA exosome. Acts as a chaperone that specifically mediates the integration of RPS19 in state post-A1. Direct regulator of SIRT1. The chain is Active regulator of SIRT1 (rps19bp1) from Xenopus tropicalis (Western clawed frog).